The chain runs to 214 residues: Probable transaldolase (214 aa).

The active-site Schiff-base intermediate with substrate is the Lys83.

It belongs to the transaldolase family. Type 3B subfamily.

Its subcellular location is the cytoplasm. The enzyme catalyses D-sedoheptulose 7-phosphate + D-glyceraldehyde 3-phosphate = D-erythrose 4-phosphate + beta-D-fructose 6-phosphate. It functions in the pathway carbohydrate degradation; pentose phosphate pathway; D-glyceraldehyde 3-phosphate and beta-D-fructose 6-phosphate from D-ribose 5-phosphate and D-xylulose 5-phosphate (non-oxidative stage): step 2/3. Functionally, transaldolase is important for the balance of metabolites in the pentose-phosphate pathway. This Desulfosudis oleivorans (strain DSM 6200 / JCM 39069 / Hxd3) (Desulfococcus oleovorans) protein is Probable transaldolase.